Consider the following 91-residue polypeptide: Small ribosomal subunit protein uS15 (91 aa).

This sequence belongs to the universal ribosomal protein uS15 family. As to quaternary structure, part of the 30S ribosomal subunit. Forms a bridge to the 50S subunit in the 70S ribosome, contacting the 23S rRNA.

One of the primary rRNA binding proteins, it binds directly to 16S rRNA where it helps nucleate assembly of the platform of the 30S subunit by binding and bridging several RNA helices of the 16S rRNA. Its function is as follows. Forms an intersubunit bridge (bridge B4) with the 23S rRNA of the 50S subunit in the ribosome. The chain is Small ribosomal subunit protein uS15 from Synechococcus sp. (strain JA-3-3Ab) (Cyanobacteria bacterium Yellowstone A-Prime).